Consider the following 156-residue polypeptide: Beta-defensin 125 (156 aa).

The N-terminal stretch at 1-20 (MNILMLTFIICGLLTRVTKG) is a signal peptide. Cystine bridges form between C27–C55, C35–C49, and C39–C56. The propeptide occupies 68 to 156 (PAFPVIHLED…PPSQTALTHN (89 aa)). The interval 108–156 (GETMTPETNTPETTMPPSEATTPETTMPPSETATSETMPPPSQTALTHN) is disordered. The span at 109–144 (ETMTPETNTPETTMPPSEATTPETTMPPSETATSET) shows a compositional bias: low complexity.

This sequence belongs to the beta-defensin family.

It localises to the secreted. Functionally, has antibacterial activity. This Homo sapiens (Human) protein is Beta-defensin 125 (DEFB125).